The following is a 420-amino-acid chain: DNA repair protein RadA (420 aa).

62 to 69 (GDPGIGKS) is a binding site for ATP. Positions 218-222 (KNRFG) match the RadA KNRFG motif motif. The segment at 317–420 (DAYLKSAGGV…IQEVLKKVFA (104 aa)) is lon-protease-like.

It belongs to the RecA family. RadA subfamily.

Plays a role in repairing double-strand DNA breaks, probably involving stabilizing or processing branched DNA or blocked replication forks. Required for efficient transformation with chromosomal (linear) DNA, but not for replicative plasmid DNA. Its increased sensitivity to a DNA damaging agent suggests it may be required for DNA repair. The sequence is that of DNA repair protein RadA from Streptococcus pneumoniae (strain ATCC BAA-255 / R6).